Here is a 359-residue protein sequence, read N- to C-terminus: MASLRSVLKSQSLRHTVRSYSSQTMPPASPFAPRHFLSIADLSPSEFATLVRNASSHKRAIKSGSMPQNLQGSLLGKTVAMIFSKRSTRTRVSTEGAVVQMGGHPMFLGKDDIQLGVNESLYDTSVVISSMVSCIVARVGKHAEVADLAKHSSVPVINALCDSFHPLQAVADFQTIYEAFTPKAHHLSSLGLEGLKIAWVGDANNVLFDMAIAATKMGVDIAVATPKGYEIPPHMLELIKSAGEGVSKPGKLLQTNIPEEAVKDADILVTDTWVSMGQEEEKAQRLKEFDGFQITAELAKRGGAKEGWKFMHCLPRHPEEVSDEVFYSNRSLVFPEAENRLWAAISALEGFVVNKGKIE.

The transit peptide at 1-24 (MASLRSVLKSQSLRHTVRSYSSQT) directs the protein to the mitochondrion. Carbamoyl phosphate contacts are provided by residues 87–90 (STRT), arginine 138, histidine 165, and glutamine 168. L-ornithine contacts are provided by asparagine 205, aspartate 271, serine 275, and methionine 276. Catalysis depends on cysteine 313, which acts as the Proton acceptor. Carbamoyl phosphate-binding positions include 313–314 (CL) and arginine 340.

This sequence belongs to the aspartate/ornithine carbamoyltransferase superfamily. OTCase family. As to quaternary structure, homotrimer.

It is found in the mitochondrion matrix. It catalyses the reaction carbamoyl phosphate + L-ornithine = L-citrulline + phosphate + H(+). The protein operates within amino-acid biosynthesis; L-arginine biosynthesis; L-arginine from L-ornithine and carbamoyl phosphate: step 1/3. This is Ornithine carbamoyltransferase, mitochondrial (argB) from Emericella nidulans (strain FGSC A4 / ATCC 38163 / CBS 112.46 / NRRL 194 / M139) (Aspergillus nidulans).